The chain runs to 191 residues: MPVSLHPLVDNGITKGDANFPGGNLYCLCPQNKVTVAIKGNVAHNHACGCSKCWKPAGALFSVVGVVPKENLSVAANADKLEILDKAAAIQRYACKECGTHLFGRIEIDHPFKGLDFVHAELSDKKGWQEPQFAGFVSSIIEQGFHPNGMDEVRSKFQSLGLQTYDTLSPPLMDLIATYTGKKNGKLSANL.

Residues 20 to 166 (FPGGNLYCLC…FQSLGLQTYD (147 aa)) enclose the CENP-V/GFA domain. Zn(2+) contacts are provided by Cys-27, Cys-29, Cys-48, Cys-50, Cys-53, Cys-95, and Cys-98.

This sequence belongs to the Gfa family. It depends on Zn(2+) as a cofactor.

It catalyses the reaction S-(hydroxymethyl)glutathione = glutathione + formaldehyde. Its pathway is one-carbon metabolism; formaldehyde degradation; formate from formaldehyde (glutathione route): step 1/3. Its function is as follows. Catalyzes the condensation of formaldehyde and glutathione to S-hydroxymethylglutathione. In Aspergillus flavus (strain ATCC 200026 / FGSC A1120 / IAM 13836 / NRRL 3357 / JCM 12722 / SRRC 167), this protein is Putative glutathione-dependent formaldehyde-activating enzyme.